The chain runs to 181 residues: Large ribosomal subunit protein uL10 (181 aa).

The protein belongs to the universal ribosomal protein uL10 family. As to quaternary structure, part of the ribosomal stalk of the 50S ribosomal subunit. The N-terminus interacts with L11 and the large rRNA to form the base of the stalk. The C-terminus forms an elongated spine to which L12 dimers bind in a sequential fashion forming a multimeric L10(L12)X complex.

In terms of biological role, forms part of the ribosomal stalk, playing a central role in the interaction of the ribosome with GTP-bound translation factors. The sequence is that of Large ribosomal subunit protein uL10 from Acidobacterium capsulatum (strain ATCC 51196 / DSM 11244 / BCRC 80197 / JCM 7670 / NBRC 15755 / NCIMB 13165 / 161).